Reading from the N-terminus, the 428-residue chain is C4-dicarboxylate transport protein (428 aa).

A run of 9 helical transmembrane segments spans residues 4–24 (SLFKSLYFQVLTAIAIGILLG), 44–64 (LIKMIIAPVIFCTVVTGIAGM), 76–96 (VALLYFEIVSTIALIIGLIIV), 142–162 (IGAFASGNILQVLLFAVLFGF), 184–204 (VIFGIINMIMRLAPIGAFGAM), 222–242 (LIICFYITCILFVVVVLGTIA), 289–309 (VVGLVIPTGYSFNLDGTSIYL), 326–346 (IFHQITLLVVLLLSSKGAAGV), and 352–372 (IVLAATISAVGHLPVAGLALI).

Belongs to the dicarboxylate/amino acid:cation symporter (DAACS) (TC 2.A.23) family.

It is found in the cell inner membrane. Responsible for the transport of dicarboxylates such as succinate, fumarate, and malate from the periplasm across the membrane. The sequence is that of C4-dicarboxylate transport protein from Salmonella arizonae (strain ATCC BAA-731 / CDC346-86 / RSK2980).